A 232-amino-acid polypeptide reads, in one-letter code: MGQKINPIGLRLGINRTWDSRWFAGKNEYGKLLHEDVKIRAILHKELKQAAVARIVIERPHKKCRVTIHSARPGVVIGKKGADIDKLRKKVADITASDVVINIVEIRKPELDATLVAESIAQQLERRVAFRRAMKRAVQSAMRLGAEGIRINCSGRLGGAEIARMEWYREGRVPLHTLRADIDYGVATAFTTFGTCGVKVWIFKGEILEHDPMAQDKRMAEGDNSRPRRDAA.

Positions 39 to 107 (IRAILHKELK…DVVINIVEIR (69 aa)) constitute a KH type-2 domain.

It belongs to the universal ribosomal protein uS3 family. In terms of assembly, part of the 30S ribosomal subunit. Forms a tight complex with proteins S10 and S14.

In terms of biological role, binds the lower part of the 30S subunit head. Binds mRNA in the 70S ribosome, positioning it for translation. This Rhodopseudomonas palustris (strain BisA53) protein is Small ribosomal subunit protein uS3.